Here is a 456-residue protein sequence, read N- to C-terminus: tRNA-2-methylthio-N(6)-dimethylallyladenosine synthase (456 aa).

Residues 13 to 129 enclose the MTTase N-terminal domain; that stretch reads RYLYVRTFGC…IASLLEEVER (117 aa). [4Fe-4S] cluster-binding residues include Cys22, Cys58, Cys92, Cys168, Cys172, and Cys175. The Radical SAM core domain occupies 154-384; the sequence is GTGDVVAQVT…QSIQADITLQ (231 aa). A TRAM domain is found at 387 to 450; the sequence is LAETGTVREV…SHSLKGELLS (64 aa).

Belongs to the methylthiotransferase family. MiaB subfamily. Monomer. The cofactor is [4Fe-4S] cluster.

The protein resides in the cytoplasm. It carries out the reaction N(6)-dimethylallyladenosine(37) in tRNA + (sulfur carrier)-SH + AH2 + 2 S-adenosyl-L-methionine = 2-methylsulfanyl-N(6)-dimethylallyladenosine(37) in tRNA + (sulfur carrier)-H + 5'-deoxyadenosine + L-methionine + A + S-adenosyl-L-homocysteine + 2 H(+). Functionally, catalyzes the methylthiolation of N6-(dimethylallyl)adenosine (i(6)A), leading to the formation of 2-methylthio-N6-(dimethylallyl)adenosine (ms(2)i(6)A) at position 37 in tRNAs that read codons beginning with uridine. In Syntrophobacter fumaroxidans (strain DSM 10017 / MPOB), this protein is tRNA-2-methylthio-N(6)-dimethylallyladenosine synthase.